The sequence spans 393 residues: Formate-dependent phosphoribosylglycinamide formyltransferase (393 aa).

Residues 22–23 (EL) and Glu-82 each bind N(1)-(5-phospho-beta-D-ribosyl)glycinamide. ATP is bound by residues Arg-114, Lys-155, 160-165 (SSGKGQ), 195-198 (ESFV), and Glu-203. Residues 119 to 308 (RLAAEELGLR…EFALHVRAVL (190 aa)) enclose the ATP-grasp domain. Glu-267 and Glu-279 together coordinate Mg(2+). Residues Asp-286, Lys-356, and 363-364 (RR) each bind N(1)-(5-phospho-beta-D-ribosyl)glycinamide.

The protein belongs to the PurK/PurT family. Homodimer.

It catalyses the reaction N(1)-(5-phospho-beta-D-ribosyl)glycinamide + formate + ATP = N(2)-formyl-N(1)-(5-phospho-beta-D-ribosyl)glycinamide + ADP + phosphate + H(+). It functions in the pathway purine metabolism; IMP biosynthesis via de novo pathway; N(2)-formyl-N(1)-(5-phospho-D-ribosyl)glycinamide from N(1)-(5-phospho-D-ribosyl)glycinamide (formate route): step 1/1. Involved in the de novo purine biosynthesis. Catalyzes the transfer of formate to 5-phospho-ribosyl-glycinamide (GAR), producing 5-phospho-ribosyl-N-formylglycinamide (FGAR). Formate is provided by PurU via hydrolysis of 10-formyl-tetrahydrofolate. The protein is Formate-dependent phosphoribosylglycinamide formyltransferase of Oleidesulfovibrio alaskensis (strain ATCC BAA-1058 / DSM 17464 / G20) (Desulfovibrio alaskensis).